The chain runs to 46 residues: Protein PsbN (46 aa).

Residues 7-27 (ALSVAIGVLAVLLGMTGFGVY) traverse the membrane as a helical segment.

The protein belongs to the PsbN family.

It localises to the cellular thylakoid membrane. May play a role in photosystem I and II biogenesis. This chain is Protein PsbN, found in Parasynechococcus marenigrum (strain WH8102).